The sequence spans 275 residues: Large ribosomal subunit protein uL2 (275 aa).

The segment at 223 to 275 (VAMNPIDHPHGGGEGRTGEAREPVSPWGTPSKGYKTRRNKRTNNMIVQRRKRK) is disordered. The segment covering 229-244 (DHPHGGGEGRTGEARE) has biased composition (basic and acidic residues).

The protein belongs to the universal ribosomal protein uL2 family. Part of the 50S ribosomal subunit. Forms a bridge to the 30S subunit in the 70S ribosome.

In terms of biological role, one of the primary rRNA binding proteins. Required for association of the 30S and 50S subunits to form the 70S ribosome, for tRNA binding and peptide bond formation. It has been suggested to have peptidyltransferase activity; this is somewhat controversial. Makes several contacts with the 16S rRNA in the 70S ribosome. This chain is Large ribosomal subunit protein uL2, found in Bordetella avium (strain 197N).